Consider the following 311-residue polypeptide: Long form salivary protein D7L1 (311 aa).

Residues 1–16 (MKALIFLGAIIAGVLS) form the signal peptide. Disulfide bonds link Cys-34–Cys-67 and Cys-63–Cys-120. Residues Ser-146, Arg-149, Tyr-153, and Lys-160 each contribute to the ADP site. 3 disulfides stabilise this stretch: Cys-170-Cys-202, Cys-183-Cys-311, and Cys-244-Cys-258. ADP is bound by residues Asn-281, Tyr-282, and Ser-283.

Belongs to the PBP/GOBP family. As to expression, distal lateral and medial lobes of female mosquito salivary gland (at protein level). Expressed in the head and thorax of the female mosquitoes, where the salivary glands are located. Expressed in salivary gland. Not detected in the female mosquito abdomen. Not detected in the male mosquito tissues.

It is found in the secreted. In terms of biological role, modulates blood feeding of female mosquitoes on vertebrate species by binding and sequestering different mediators involved in the host response. Binds adenine, adenosine, AMP, ADP and ATP, with the highest affinity to ATP and ADP. Inhibits agonist-induced platelet aggregation and hemostasis. In Culex quinquefasciatus (Southern house mosquito), this protein is Long form salivary protein D7L1.